The sequence spans 274 residues: 2,3,4,5-tetrahydropyridine-2,6-dicarboxylate N-succinyltransferase (274 aa).

The substrate site is built by Arg104 and Asp141.

The protein belongs to the transferase hexapeptide repeat family. In terms of assembly, homotrimer.

Its subcellular location is the cytoplasm. The enzyme catalyses (S)-2,3,4,5-tetrahydrodipicolinate + succinyl-CoA + H2O = (S)-2-succinylamino-6-oxoheptanedioate + CoA. The protein operates within amino-acid biosynthesis; L-lysine biosynthesis via DAP pathway; LL-2,6-diaminopimelate from (S)-tetrahydrodipicolinate (succinylase route): step 1/3. This chain is 2,3,4,5-tetrahydropyridine-2,6-dicarboxylate N-succinyltransferase, found in Buchnera aphidicola subsp. Acyrthosiphon pisum (strain APS) (Acyrthosiphon pisum symbiotic bacterium).